The primary structure comprises 636 residues: MSKEHGAAAEKHEFRTEVRKLLHIITHSLYTNREIFLRELVSNASDALDKLRFAQTRGEAAPAADLDLNIAITVNEETRTLTVSDTGIGMTRQELIDNLGTIASSGSERFLKELAEKGEQASNIIGRFGVGFYAVFMVADSVTVTTRSALDASGAWRWTSDGLGSFELEEALDAPERGTRIDIRLKEDAGDFLKKDHLKDVIRRHSNFIPFPVSVEGEHVNTTPALWREPRFQVTEEQYKDFYTFLTFDTQAPMDTIHLSIDAPVQFTSLAFIPNFGNELFGYDRDKYGLDLYVRRVLISKEYKALIPEYLSFLKGVVDTEDLPLNISRETLQENALIAKIRQTLVKQVLAHLAKLAESDAEKYATFWRTHGRVFRMGYNDYINRDKFIPLLRFNSSALDDEKGLCSLDDYIGRAREGQKTVWYVSAPNREAARLNPHVEIFRRKGIEVLYLYEAADEFIMESLGKWNEFEFRSAEHADADALKDFDDVEKKDAPEALDEEGRKTLSSLLSHMKTLLGDKVEDVRESARLSDSPACLASKDGGMTASMEKLMRVMNKDESVPRKVLEINPDHPLTRNLLRLYRADADDRLLAQATEQLYESALLLEGYLRDPHALVGRVNSLLEQATGWYAEVRKL.

Residues 1-329 (MSKEHGAAAE…TEDLPLNISR (329 aa)) form an a; substrate-binding region. Positions 330–550 (ETLQENALIA…DGGMTASMEK (221 aa)) are b. The interval 551 to 636 (LMRVMNKDES…TGWYAEVRKL (86 aa)) is c.

It belongs to the heat shock protein 90 family. Homodimer.

It is found in the cytoplasm. Its function is as follows. Molecular chaperone. Has ATPase activity. The protein is Chaperone protein HtpG of Oleidesulfovibrio alaskensis (strain ATCC BAA-1058 / DSM 17464 / G20) (Desulfovibrio alaskensis).